We begin with the raw amino-acid sequence, 332 residues long: COP9 signalosome complex subunit 5 (332 aa).

One can recognise an MPN domain in the interval 54-191 (VKISAIALLK…IGAFRTYPQG (138 aa)). The Zn(2+) site is built by H137, H139, and D150. Positions 137–150 (HSHPGYGCWLSGID) match the JAMM motif motif.

It belongs to the peptidase M67A family. CSN5 subfamily. In terms of assembly, component of the CSN complex. The holocomplex is comprised of 8 subunits csn1-8. In the complex, it probably interacts directly with csn1, csn2, csn3, csn4, csn6 and csn8. Requires a divalent metal cation as cofactor.

It localises to the cytoplasm. It is found in the nucleus. In terms of biological role, probable protease subunit of the COP9 signalosome complex (CSN), a complex involved in various cellular and developmental processes. The CSN complex is an essential regulator of the ubiquitin (Ubl) conjugation pathway by mediating the deneddylation of the cullin subunits of E3 ligasew complexes, leading to modify the Ubl ligase activity. In the complex, it probably acts as the catalytic center that mediates the cleavage of Nedd8 from cullins. Csn5 is essential for growth or survival. This chain is COP9 signalosome complex subunit 5 (csn5), found in Dictyostelium discoideum (Social amoeba).